A 115-amino-acid chain; its full sequence is Cycloviolacin-O13 (115 aa).

The first 22 residues, 1–22 (MDAKKMFVALVLIATFALPSLA), serve as a signal peptide directing secretion. Positions 23–81 (TFEKDFITPETIQAILKKSAPLSNIMLEEDVINALLKSKTVISNPIIEEAFLKNSNGLN) are excised as a propeptide. The cyclopeptide (Gly-Asn) cross-link spans 82 to 111 (GIPCGESCVWIPCISAAIGCSCKSKVCYRN). Disulfide bonds link Cys-85-Cys-101, Cys-89-Cys-103, and Cys-94-Cys-108. A propeptide spanning residues 112-115 (SLDN) is cleaved from the precursor.

Cycloviolacin-O13 is a cyclic peptide. Expressed in leaves, petals, petioles, roots and runners (at protein level).

In terms of biological role, probably participates in a plant defense mechanism. Has hemolytic activity. The protein is Cycloviolacin-O13 of Viola odorata (Sweet violet).